A 250-amino-acid polypeptide reads, in one-letter code: Beta-crystallin B1 (250 aa).

The segment covering M1–V13 has biased composition (polar residues). Residues M1–V49 are disordered. Position 2 is an N-acetylserine (S2). The segment at S2–S56 is N-terminal arm. A compositionally biased stretch (pro residues) spans G28–V42. 2 consecutive Beta/gamma crystallin 'Greek key' domains span residues Y57–S96 and G97–R141. Residues M142–E146 form a connecting peptide region. Beta/gamma crystallin 'Greek key' domains follow at residues H147–G188 and G189–R231. The interval R233–K250 is C-terminal arm.

The protein belongs to the beta/gamma-crystallin family. In terms of assembly, homo/heterodimer, or complexes of higher-order. The structure of beta-crystallin oligomers seems to be stabilized through interactions between the N-terminal arms. Specific cleavages in the N-terminal arm occur during lens maturation and give rise to truncated forms, leading to impaired oligomerization and protein insolubilization. The protease responsible for this partial degradation could be calpain II.

Crystallins are the dominant structural components of the vertebrate eye lens. This is Beta-crystallin B1 (Crybb1) from Mus musculus (Mouse).